Reading from the N-terminus, the 456-residue chain is Protein king tubby (456 aa).

Positions 111 to 202 are disordered; the sequence is HELEDEESSP…SNGAGGESEG (92 aa). The span at 120–152 shows a compositional bias: polar residues; that stretch reads PVTVIEQQQTAPHSANSTHSQRPSTTRQPSFND. Ser149 carries the phosphoserine modification.

The protein belongs to the TUB family.

Its subcellular location is the cytoplasm. The protein localises to the nucleus. The protein resides in the cell projection. It is found in the cilium membrane. It localises to the rhabdomere. The chain is Protein king tubby from Drosophila pseudoobscura pseudoobscura (Fruit fly).